We begin with the raw amino-acid sequence, 265 residues long: Proline-rich protein 23B (265 aa).

A compositionally biased stretch (low complexity) spans 1–18; that stretch reads MVSRPRSPSAFPAPWWGQ. Disordered regions lie at residues 1–49 and 226–265; these read MVSR…EDPA and PSSP…LFQA. A compositionally biased stretch (pro residues) spans 226-237; sequence PSSPLQPLPPSP. Over residues 256-265 the composition is skewed to basic residues; that stretch reads CKARRRLFQA.

The protein belongs to the PRR23 family.

The chain is Proline-rich protein 23B (PRR23B) from Homo sapiens (Human).